The chain runs to 131 residues: Flagellar assembly factor FliW (131 aa).

Belongs to the FliW family. Interacts with translational regulator CsrA and flagellin(s).

The protein localises to the cytoplasm. Its function is as follows. Acts as an anti-CsrA protein, binds CsrA and prevents it from repressing translation of its target genes, one of which is flagellin. Binds to flagellin and participates in the assembly of the flagellum. This Campylobacter lari (strain RM2100 / D67 / ATCC BAA-1060) protein is Flagellar assembly factor FliW.